A 127-amino-acid polypeptide reads, in one-letter code: Snaclec bothroinsularin subunit beta (127 aa).

Disulfide bonds link Cys-2/Cys-13, Cys-30/Cys-123, and Cys-100/Cys-115. One can recognise a C-type lectin domain in the interval 9–124 (YEGSCYRVFE…CTKLEYFVCE (116 aa)).

It belongs to the snaclec family. As to quaternary structure, heterodimer of subunits alpha and beta; disulfide-linked. In terms of tissue distribution, expressed by the venom gland.

The protein localises to the secreted. In terms of biological role, thrombin and prothrombin (F2) inhibitor. The IC(50) of thrombin-induced platelet aggregation and fibrinocoagulation is 62 and 35 nM, respectively. Its inhibitory activity is at least 10-fold lower than that observed for other thrombin inhibitors. The chain is Snaclec bothroinsularin subunit beta from Bothrops insularis (Golden lancehead).